The chain runs to 426 residues: Putative phosphate permease CT_962 (426 aa).

11 helical membrane passes run 1 to 21 (MWLL…NIGA), 37 to 57 (LTLK…AVLL), 83 to 103 (VFGM…ASFC), 104 to 124 (GWPV…GIIL), 140 to 160 (VSWL…FSFI), 183 to 203 (AIII…APVI), 207 to 227 (PALR…IWGI), 260 to 280 (LIVE…MSFA), 309 to 329 (VLLV…ATWG), 365 to 385 (LGFP…IGFA), and 399 to 419 (IVLS…VFFL).

It belongs to the inorganic phosphate transporter (PiT) (TC 2.A.20) family.

Its subcellular location is the cell membrane. Its function is as follows. Potential transporter for phosphate. This chain is Putative phosphate permease CT_962, found in Chlamydia trachomatis serovar D (strain ATCC VR-885 / DSM 19411 / UW-3/Cx).